The chain runs to 185 residues: UPF0301 protein IL2218 (185 aa).

It belongs to the UPF0301 (AlgH) family.

The sequence is that of UPF0301 protein IL2218 from Idiomarina loihiensis (strain ATCC BAA-735 / DSM 15497 / L2-TR).